A 199-amino-acid chain; its full sequence is MPVVECDIQTARAALADAGASFSDGNSEHELWHADLGDAHAVAYADKLVVQGGSPTDITAVVQPDRGGRVHAYFDGASRGNPGPAAVGWVLVSGDGGIVAEGGDTIGRATNNQAEYDALIAALEAAADFGFDDIELRGDSQLVEKQLTGAWDTNDPDLRRKRVRARELLTGFDDWSITHVPRATNERADALANEALDDA.

The not required for RNase H activity stretch occupies residues M1–G68. The RNase H type-1 domain occupies R66–D197. The segment at R69 to A199 is as active as intact RNase H. Mg(2+) contacts are provided by D75, E115, D139, and D189. Mn(2+) contacts are provided by D75, E115, D139, and D189.

It belongs to the RNase H family. The cofactor is Mn(2+). It depends on Mg(2+) as a cofactor. Co(2+) is required as a cofactor. Requires Ni(2+) as cofactor.

The protein localises to the cytoplasm. The catalysed reaction is Endonucleolytic cleavage to 5'-phosphomonoester.. Nuclease that specifically degrades the RNA of RNA-DNA hybrids; seems to act exonucleolytically on RNA/DNA hybrids. Endonucleolytically removes RNA primers from the Okazaki fragments of lagging strand synthesis on its own. Complements the temperature-sensitive phenotype of an E.coli double rnhA/rnhB (RNase H) disruption mutant. This Halobacterium salinarum (strain ATCC 700922 / JCM 11081 / NRC-1) (Halobacterium halobium) protein is Ribonuclease HI (rnhA).